The following is a 172-amino-acid chain: Endoribonuclease YbeY (172 aa).

Zn(2+) contacts are provided by His124, His128, and His134.

This sequence belongs to the endoribonuclease YbeY family. The cofactor is Zn(2+).

Its subcellular location is the cytoplasm. Its function is as follows. Single strand-specific metallo-endoribonuclease involved in late-stage 70S ribosome quality control and in maturation of the 3' terminus of the 16S rRNA. This chain is Endoribonuclease YbeY, found in Rhodopseudomonas palustris (strain BisA53).